The primary structure comprises 204 residues: Paraneoplastic antigen-like protein 8C (204 aa).

The interval 135–204 (PPATGPRELP…RRHHASDKKL (70 aa)) is disordered. Positions 182–204 (VGKRGKRKNKKNRRRHHASDKKL) are enriched in basic residues.

Belongs to the PNMA family.

The chain is Paraneoplastic antigen-like protein 8C from Homo sapiens (Human).